The chain runs to 268 residues: tRNA pseudouridine synthase A (268 aa).

The active-site Nucleophile is Asp52. Residue Tyr113 participates in substrate binding.

The protein belongs to the tRNA pseudouridine synthase TruA family. Homodimer.

It catalyses the reaction uridine(38/39/40) in tRNA = pseudouridine(38/39/40) in tRNA. Formation of pseudouridine at positions 38, 39 and 40 in the anticodon stem and loop of transfer RNAs. This chain is tRNA pseudouridine synthase A, found in Chlamydia felis (strain Fe/C-56) (Chlamydophila felis).